A 305-amino-acid chain; its full sequence is ATP synthase gamma chain (305 aa).

The protein belongs to the ATPase gamma chain family. As to quaternary structure, F-type ATPases have 2 components, CF(1) - the catalytic core - and CF(0) - the membrane proton channel. CF(1) has five subunits: alpha(3), beta(3), gamma(1), delta(1), epsilon(1). CF(0) has three main subunits: a, b and c.

The protein resides in the cell membrane. Produces ATP from ADP in the presence of a proton gradient across the membrane. The gamma chain is believed to be important in regulating ATPase activity and the flow of protons through the CF(0) complex. This chain is ATP synthase gamma chain, found in Streptomyces griseus subsp. griseus (strain JCM 4626 / CBS 651.72 / NBRC 13350 / KCC S-0626 / ISP 5235).